A 236-amino-acid chain; its full sequence is Purine nucleoside phosphorylase DeoD-type (236 aa).

H5 lines the a purine D-ribonucleoside pocket. Phosphate contacts are provided by residues G21, R25, R44, and 88 to 91 (RIGS). A purine D-ribonucleoside contacts are provided by residues 180-182 (EME) and 204-205 (SD). D205 serves as the catalytic Proton donor.

It belongs to the PNP/UDP phosphorylase family. In terms of assembly, homohexamer; trimer of homodimers.

The enzyme catalyses a purine D-ribonucleoside + phosphate = a purine nucleobase + alpha-D-ribose 1-phosphate. It carries out the reaction a purine 2'-deoxy-D-ribonucleoside + phosphate = a purine nucleobase + 2-deoxy-alpha-D-ribose 1-phosphate. Catalyzes the reversible phosphorolytic breakdown of the N-glycosidic bond in the beta-(deoxy)ribonucleoside molecules, with the formation of the corresponding free purine bases and pentose-1-phosphate. In Chromobacterium violaceum (strain ATCC 12472 / DSM 30191 / JCM 1249 / CCUG 213 / NBRC 12614 / NCIMB 9131 / NCTC 9757 / MK), this protein is Purine nucleoside phosphorylase DeoD-type.